Consider the following 207-residue polypeptide: Large ribosomal subunit protein bL25 (207 aa).

A disordered region spans residues 1–20 (MANHQIKAQRRKDEGKGASR).

Belongs to the bacterial ribosomal protein bL25 family. CTC subfamily. As to quaternary structure, part of the 50S ribosomal subunit; part of the 5S rRNA/L5/L18/L25 subcomplex. Contacts the 5S rRNA. Binds to the 5S rRNA independently of L5 and L18.

This is one of the proteins that binds to the 5S RNA in the ribosome where it forms part of the central protuberance. The sequence is that of Large ribosomal subunit protein bL25 from Xylella fastidiosa (strain M12).